The primary structure comprises 111 residues: Parvalbumin alpha (111 aa).

Threonine 1 carries the post-translational modification N-acetylthreonine; in form C2. 2 consecutive EF-hand domains span residues 40 to 75 (KPDD…FAAG) and 79 to 111 (LTAN…VKAA). The Ca(2+) site is built by aspartate 53, aspartate 55, serine 57, tyrosine 59, glutamate 61, glutamate 64, aspartate 92, aspartate 94, aspartate 96, lysine 98, and glutamate 103.

This sequence belongs to the parvalbumin family. Acetylation of Thr-1 converts C1 to C2.

Functionally, in muscle, parvalbumin is thought to be involved in relaxation after contraction. It binds two calcium ions. The protein is Parvalbumin alpha of Latimeria chalumnae (Coelacanth).